An 862-amino-acid chain; its full sequence is Probable alpha,alpha-trehalose-phosphate synthase [UDP-forming] 11 (862 aa).

Phosphoserine is present on S5. A glycosyltransferase region spans residues 50–538 (PKRIVVSNQL…ARSYDQDLQR (489 aa)). The segment at 838–862 (SKHEQQKKQSKFTFQQPMGQCRKKA) is disordered.

It in the N-terminal section; belongs to the glycosyltransferase 20 family. This sequence in the C-terminal section; belongs to the trehalose phosphatase family. As to expression, expressed in leaves, roots, stems and flowers.

It carries out the reaction D-glucose 6-phosphate + UDP-alpha-D-glucose = alpha,alpha-trehalose 6-phosphate + UDP + H(+). The chain is Probable alpha,alpha-trehalose-phosphate synthase [UDP-forming] 11 (TPS11) from Arabidopsis thaliana (Mouse-ear cress).